A 783-amino-acid chain; its full sequence is Protein DWD HYPERSENSITIVE TO UV-B 1 (783 aa).

WD repeat units lie at residues 145–198 (GEFT…LKLP) and 212–256 (SDSS…DPSL). A Nuclear localization signal motif is present at residues 382–389 (RKKESVVR). WD repeat units follow at residues 439–480 (DNSR…IFRY), 485–525 (GSQS…STVT), 538–577 (DEFD…RLQV), 581–621 (MHQE…SRPC), 625–664 (SSTK…LHLN), and 666–710 (EIVP…RRLR).

In terms of assembly, interacts directly with DDB1A. Binds to COP1 and RUP1.

It is found in the nucleus. Its function is as follows. May act as a substrate receptor of a CUL4-RING E3 ubiquitin-protein ligase (CRL4) complex involved in the negative regulation of cellular responses to ultraviolet-B (UV-B) illumination, likely in coordination with RUP1. Interacts with COP1 and probably prevents the formation of active UVR8-COP1 complex, thus avoiding UVR8-COP1-mediated positive regulation of UV-B responses. In Arabidopsis thaliana (Mouse-ear cress), this protein is Protein DWD HYPERSENSITIVE TO UV-B 1.